We begin with the raw amino-acid sequence, 151 residues long: Urease accessory protein UreE (151 aa).

It belongs to the UreE family.

The protein localises to the cytoplasm. Functionally, involved in urease metallocenter assembly. Binds nickel. Probably functions as a nickel donor during metallocenter assembly. This is Urease accessory protein UreE from Lachnoclostridium phytofermentans (strain ATCC 700394 / DSM 18823 / ISDg) (Clostridium phytofermentans).